We begin with the raw amino-acid sequence, 347 residues long: UDP-3-O-acylglucosamine N-acyltransferase (347 aa).

Catalysis depends on His240, which acts as the Proton acceptor.

Belongs to the transferase hexapeptide repeat family. LpxD subfamily. Homotrimer.

The enzyme catalyses a UDP-3-O-[(3R)-3-hydroxyacyl]-alpha-D-glucosamine + a (3R)-hydroxyacyl-[ACP] = a UDP-2-N,3-O-bis[(3R)-3-hydroxyacyl]-alpha-D-glucosamine + holo-[ACP] + H(+). It functions in the pathway bacterial outer membrane biogenesis; LPS lipid A biosynthesis. Catalyzes the N-acylation of UDP-3-O-acylglucosamine using 3-hydroxyacyl-ACP as the acyl donor. Is involved in the biosynthesis of lipid A, a phosphorylated glycolipid that anchors the lipopolysaccharide to the outer membrane of the cell. The protein is UDP-3-O-acylglucosamine N-acyltransferase of Hydrogenovibrio crunogenus (strain DSM 25203 / XCL-2) (Thiomicrospira crunogena).